A 1224-amino-acid chain; its full sequence is ATP-dependent helicase/nuclease subunit A (1224 aa).

Positions Val-15–Arg-480 constitute a UvrD-like helicase ATP-binding domain. Ala-36 to Thr-43 provides a ligand contact to ATP. Residues Glu-497 to Gly-791 form the UvrD-like helicase C-terminal domain.

It belongs to the helicase family. AddA subfamily. As to quaternary structure, heterodimer of AddA and AddB/RexB. Mg(2+) is required as a cofactor.

The enzyme catalyses Couples ATP hydrolysis with the unwinding of duplex DNA by translocating in the 3'-5' direction.. It catalyses the reaction ATP + H2O = ADP + phosphate + H(+). The heterodimer acts as both an ATP-dependent DNA helicase and an ATP-dependent, dual-direction single-stranded exonuclease. Recognizes the chi site generating a DNA molecule suitable for the initiation of homologous recombination. The AddA nuclease domain is required for chi fragment generation; this subunit has the helicase and 3' -&gt; 5' nuclease activities. This is ATP-dependent helicase/nuclease subunit A from Staphylococcus epidermidis (strain ATCC 12228 / FDA PCI 1200).